A 455-amino-acid polypeptide reads, in one-letter code: Rho GTPase-activating protein 3 (455 aa).

A compositionally biased stretch (polar residues) spans 1–12; sequence MTNFSRSKSTGT. The interval 1–68 is disordered; sequence MTNFSRSKST…HASRSGNGSG (68 aa). A compositionally biased stretch (basic and acidic residues) spans 24–33; it reads GPDKYENIHN. Low complexity predominate over residues 43–54; the sequence is STTSTDYYDAST. Over residues 55 to 64 the composition is skewed to polar residues; the sequence is PLSSHASRSG. The region spanning 105–118 is the CRIB domain; that stretch reads IGWPTEVKHVSHVT. Residues 153-331 enclose the Rho-GAP domain; that stretch reads KSMQCSYDDR…LILMNLKERE (179 aa). Disordered stretches follow at residues 342–366 and 432–455; these read KQTSDPSEEWESQHSEILSPEKPNN and FVSNRDEGRKGREAWSSRLSSLPW. Positions 435 to 446 are enriched in basic and acidic residues; it reads NRDEGRKGREAW.

As to expression, expressed in differentiating xylem cells.

The protein localises to the cell membrane. Its function is as follows. Acts as a GTPase activator for the Rac-type GTPase by converting it to an inactive GDP-bound state. Involved in secondary wall pattern formation. In association with ROPGEF4, mediates local activation of ARAC10/ROP11 to initiate the distinct pattern of secondary cell walls in xylem cells. The protein is Rho GTPase-activating protein 3 (ROPGAP3) of Arabidopsis thaliana (Mouse-ear cress).